We begin with the raw amino-acid sequence, 176 residues long: Small capsomere-interacting protein (176 aa).

Disordered regions lie at residues 75–109 (DKRQ…ASAG) and 148–176 (ASAA…RKKQ). Low complexity predominate over residues 80–109 (ASVAGAGAHAHLGGSSATPVQQAQAAASAG).

The protein belongs to the herpesviridae small capsomere-interacting protein family. As to quaternary structure, interacts with the major capsid protein/MCP.

It localises to the virion. The protein resides in the host nucleus. Its function is as follows. Participates in the assembly of the infectious particles by decorating the outer surface of the capsid shell and thus forming a layer between the capsid and the tegument. Complexes composed of the major capsid protein and small capsomere-interacting protein/SCP assemble together in the host cytoplasm and are translocated to the nucleus, where they accumulate and participate in capsid assembly. The chain is Small capsomere-interacting protein from Epstein-Barr virus (strain B95-8) (HHV-4).